The following is a 413-amino-acid chain: MSNAASAPKKVVLAYSGGLDTSIILKWLQVEFGCEVVTFTADLGQGEELEPARKKALAAGVKPENIFIEDVREEFVRDFVFPMFRANAVYEGVYLLGTSIARPLIAKRQIEIADMVGADAVCHGATGKGNDQVRFELGYYGLNPDIKVIAPWRDWAFKSRTDLLKFAEEHGIEIAKDKRGEAPFSVDANLLHSSSEGKVLENPAEPAPEFVHMRTVSPEDAPDQAEVITISFEKGDAVAINGEAMSPATLLTALNAYGKKHGIGRLDLLENRFVGMKSRGIYETPGGTILLVAHRGIEQATLDRGAAHLKDELMPKYAELIYNGFWWSPEREMLQAAIDHSQRWVTGDVTMKLYKGNAYLIGRSSPYSLYSEKIVTFEDDHGAYDQKDAAGFIKLNALRLRLLAGRDRKFGKN.

ATP is bound by residues 14–22 (AYSGGLDTS) and Ala41. The L-citrulline site is built by Tyr94 and Ser99. ATP is bound at residue Gly124. Residues Thr126, Asn130, and Asp131 each coordinate L-aspartate. Asn130 lines the L-citrulline pocket. Arg134, Ser185, Ser194, Glu270, and Tyr282 together coordinate L-citrulline.

Belongs to the argininosuccinate synthase family. Type 1 subfamily. In terms of assembly, homotetramer.

It localises to the cytoplasm. The catalysed reaction is L-citrulline + L-aspartate + ATP = 2-(N(omega)-L-arginino)succinate + AMP + diphosphate + H(+). The protein operates within amino-acid biosynthesis; L-arginine biosynthesis; L-arginine from L-ornithine and carbamoyl phosphate: step 2/3. The sequence is that of Argininosuccinate synthase from Hyphomonas neptunium (strain ATCC 15444).